A 469-amino-acid polypeptide reads, in one-letter code: SHC-transforming protein 1 (469 aa).

The segment at 1–26 (MNKLSGGGGRRTRVEGGQLGGEEWTR) is disordered. At Ser-29 the chain carries Phosphoserine. Lys-44 carries the post-translational modification N6-acetyllysine. A PID domain is found at 46–229 (MGPGVSYLVR…AGFDGSAWDE (184 aa)). Residues 230 to 373 (EEEELPDHQY…SMAEQLQGES (144 aa)) are CH1. Phosphotyrosine occurs at positions 239, 240, and 313. The disordered stretch occupies residues 322-344 (ARQAGGGAGPPNPSVNGSAPRDL). Phosphoserine is present on Ser-339. Residues 374–465 (WFHGKLSRRE…GSELCLQQPV (92 aa)) form the SH2 domain.

Interacts with CPNE3; this interaction may mediate the binding of CPNE3 with ERBB2. Interacts with the NPXY motif of tyrosine-phosphorylated IGF1R and INSR in vitro via the PID domain. Once activated, binds to GRB2. Interacts with tyrosine-phosphorylated CD3T and DDR2. Interacts with the N-terminal region of APS. Interacts with phosphorylated LRP1 and IRS4. Interacts with INPP5D/SHIP1 and INPPL1/SHIP2. Interacts with ALK, GAB2, GRB7 and KIT. Interacts with PTPN6/SHP (tyrosine phosphorylated). Identified in a complex containing FGFR4, NCAM1, CDH2, PLCG1, FRS2A, SRC, SHC1, GAP43 and CTTN. Interacts with EPHB1 and GRB2; activates the MAPK/ERK cascade to regulate cell migration. Interacts with PDGFRB (tyrosine-phosphorylated). Interacts with ERBB4. Interacts with TEK/TIE2 (tyrosine-phosphorylated). Interacts with PTK2/FAK1. Interacts with FLT4 (tyrosine-phosphorylated). Interacts with the Trk receptors NTRK1, NTRK2 and NTRK3; in a phosphotyrosine-dependent manner. Interacts with CEACAM1; this interaction is CEACAM1-phosphorylation-dependent and mediates interaction with EGFR or INSR resulting in decrease coupling of SHC1 to the MAPK3/ERK1-MAPK1/ERK2 pathway. Interacts (via PID domain) with PEAK1 (when phosphorylated). Found in a complex with PPP1CA, PPP1CC, SHC1 and PEAK1. Post-translationally, phosphorylated by activated epidermal growth factor receptor. Phosphorylated in response to KIT signaling. Tyrosine phosphorylated in response to FLT3 signaling and by ligand-activated ALK. Tyrosine phosphorylated by TEK/TIE2. Tyrosine phosphorylated by ligand-activated PDGFRB. May be tyrosine phosphorylated by activated PTK2/FAK1. Dephosphorylation by PTPN2 may regulate interaction with GRB2. Phosphorylated in response to FLT4 signaling. Tyrosine phosphorylated by activated PTK2B/PYK2.

It localises to the cytoplasm. Its subcellular location is the cell junction. The protein resides in the focal adhesion. Its function is as follows. Signaling adapter that couples activated growth factor receptors to signaling pathways. Participates in a signaling cascade initiated by activated KIT and KITLG/SCF. Participates in signaling downstream of the angiopoietin receptor TEK/TIE2, and plays a role in the regulation of endothelial cell migration and sprouting angiogenesis. The chain is SHC-transforming protein 1 (Shc1) from Rattus norvegicus (Rat).